The primary structure comprises 1109 residues: Ankyrin repeat- and BTB/POZ domain-containing protein 3 (1109 aa).

Residues 168–188 (IVLSWGLAAHCTAAALAALSL) form a helical membrane-spanning segment. The interval 260–302 (SCSGPGPGSSSGSGPGPGSGPGAPAADKERETPGGGAASGGPC) is disordered. The span at 264–280 (PGPGSSSGSGPGPGSGP) shows a compositional bias: gly residues. ANK repeat units follow at residues 608–637 (QGMT…DLNV), 654–683 (RHWT…KVEG), 692–721 (YSET…DPLI), 735–764 (GDMN…KEKS), and 830–859 (TWLE…TIQE). Residues 928–994 (SDVTFLVEGR…LYYGGPESLL (67 aa)) enclose the BTB domain.

The protein localises to the membrane. The polypeptide is Ankyrin repeat- and BTB/POZ domain-containing protein 3 (Abtb3) (Mus musculus (Mouse)).